A 249-amino-acid chain; its full sequence is Type III pantothenate kinase (249 aa).

Residue 6–13 (DCGNSLIK) participates in ATP binding. Substrate is bound by residues Tyr-93 and 100–103 (GLDR). Catalysis depends on Asp-102, which acts as the Proton acceptor. Position 122 (Asp-122) interacts with K(+). Thr-125 contributes to the ATP binding site. Thr-181 serves as a coordination point for substrate.

This sequence belongs to the type III pantothenate kinase family. As to quaternary structure, homodimer. The cofactor is NH4(+). Requires K(+) as cofactor.

It is found in the cytoplasm. The catalysed reaction is (R)-pantothenate + ATP = (R)-4'-phosphopantothenate + ADP + H(+). The protein operates within cofactor biosynthesis; coenzyme A biosynthesis; CoA from (R)-pantothenate: step 1/5. Catalyzes the phosphorylation of pantothenate (Pan), the first step in CoA biosynthesis. The protein is Type III pantothenate kinase of Pseudomonas paraeruginosa (strain DSM 24068 / PA7) (Pseudomonas aeruginosa (strain PA7)).